A 117-amino-acid chain; its full sequence is MISKPDKNKLRVKRHKRVRGKISGTAARPRLNVFRSNANIYAQLIDDVAGVTLASASSHDAEVSGTKTEQATKVGELIATRGKAAGFEDVIFDRGGYLYHGRVQALAESARENGLKF.

The protein belongs to the universal ribosomal protein uL18 family. As to quaternary structure, part of the 50S ribosomal subunit; part of the 5S rRNA/L5/L18/L25 subcomplex. Contacts the 5S and 23S rRNAs.

This is one of the proteins that bind and probably mediate the attachment of the 5S RNA into the large ribosomal subunit, where it forms part of the central protuberance. The protein is Large ribosomal subunit protein uL18 of Leuconostoc citreum (strain KM20).